A 357-amino-acid polypeptide reads, in one-letter code: Protein BIG GRAIN 1-like A (357 aa).

2 disordered regions span residues 1 to 146 and 208 to 233; these read MEIT…KELG and SSTCSSASSFSRSCLSKTPSSSGKSK. Basic and acidic residues predominate over residues 75–87; the sequence is DFERSRRKTDFLR. Composition is skewed to low complexity over residues 88–104 and 112–127; these read HSNSSSSDSSGFSSSES and KSSASPPSSSRQQPKP. Residues 129 to 139 show a composition bias toward polar residues; that stretch reads RTSSVDHSSAV. A compositionally biased stretch (low complexity) spans 208–223; the sequence is SSTCSSASSFSRSCLS.

Belongs to the BIG GRAIN 1 (BG1) plant protein family.

The protein resides in the cell membrane. Functionally, involved in auxin transport. Regulator of the auxin signaling pathway. This chain is Protein BIG GRAIN 1-like A, found in Arabidopsis thaliana (Mouse-ear cress).